We begin with the raw amino-acid sequence, 310 residues long: Tryptophan 2,3-dioxygenase (310 aa).

Residues 1–36 (MQPPGEDAPAGCPFSGARAAHSAPAAPAAHEASHVP) are disordered. Positions 15–36 (SGARAAHSAPAAPAAHEASHVP) are enriched in low complexity. Residues 79 to 83 (FIIQH), Tyr-141, and Arg-145 each bind substrate. His-268 contacts heme. Residue Thr-282 participates in substrate binding.

This sequence belongs to the tryptophan 2,3-dioxygenase family. As to quaternary structure, homotetramer. Heme is required as a cofactor.

The catalysed reaction is L-tryptophan + O2 = N-formyl-L-kynurenine. Its pathway is amino-acid degradation; L-tryptophan degradation via kynurenine pathway; L-kynurenine from L-tryptophan: step 1/2. In terms of biological role, heme-dependent dioxygenase that catalyzes the oxidative cleavage of the L-tryptophan (L-Trp) pyrrole ring and converts L-tryptophan to N-formyl-L-kynurenine. Catalyzes the oxidative cleavage of the indole moiety. This Burkholderia lata (strain ATCC 17760 / DSM 23089 / LMG 22485 / NCIMB 9086 / R18194 / 383) protein is Tryptophan 2,3-dioxygenase.